Reading from the N-terminus, the 361-residue chain is Queuine tRNA-ribosyltransferase (361 aa).

D92 (proton acceptor) is an active-site residue. Residues 92–96 (DSGGF), D146, Q189, and G216 contribute to the substrate site. Positions 247-253 (GVGKPVD) are RNA binding. D266 acts as the Nucleophile in catalysis. An RNA binding; important for wobble base 34 recognition region spans residues 271–275 (TRSGR). Zn(2+)-binding residues include C304, C306, C309, and H335.

This sequence belongs to the queuine tRNA-ribosyltransferase family. In terms of assembly, homodimer. Within each dimer, one monomer is responsible for RNA recognition and catalysis, while the other monomer binds to the replacement base PreQ1. Requires Zn(2+) as cofactor.

It carries out the reaction 7-aminomethyl-7-carbaguanine + guanosine(34) in tRNA = 7-aminomethyl-7-carbaguanosine(34) in tRNA + guanine. It participates in tRNA modification; tRNA-queuosine biosynthesis. Its function is as follows. Catalyzes the base-exchange of a guanine (G) residue with the queuine precursor 7-aminomethyl-7-deazaguanine (PreQ1) at position 34 (anticodon wobble position) in tRNAs with GU(N) anticodons (tRNA-Asp, -Asn, -His and -Tyr). Catalysis occurs through a double-displacement mechanism. The nucleophile active site attacks the C1' of nucleotide 34 to detach the guanine base from the RNA, forming a covalent enzyme-RNA intermediate. The proton acceptor active site deprotonates the incoming PreQ1, allowing a nucleophilic attack on the C1' of the ribose to form the product. After dissociation, two additional enzymatic reactions on the tRNA convert PreQ1 to queuine (Q), resulting in the hypermodified nucleoside queuosine (7-(((4,5-cis-dihydroxy-2-cyclopenten-1-yl)amino)methyl)-7-deazaguanosine). The sequence is that of Queuine tRNA-ribosyltransferase from Rickettsia africae (strain ESF-5).